Consider the following 93-residue polypeptide: UPF0223 protein YfdD (93 aa).

It belongs to the UPF0223 family.

The protein is UPF0223 protein YfdD (yfdD) of Lactococcus lactis subsp. lactis (strain IL1403) (Streptococcus lactis).